The chain runs to 940 residues: Isoleucine--tRNA ligase (940 aa).

The short motif at 58-68 (PYANGSIHIGH) is the 'HIGH' region element. Residue Glu-564 coordinates L-isoleucyl-5'-AMP. The short motif at 605 to 609 (KMSKS) is the 'KMSKS' region element. Lys-608 is an ATP binding site. Cys-903, Cys-906, Cys-923, and Cys-926 together coordinate Zn(2+).

Belongs to the class-I aminoacyl-tRNA synthetase family. IleS type 1 subfamily. Monomer. It depends on Zn(2+) as a cofactor.

The protein localises to the cytoplasm. The enzyme catalyses tRNA(Ile) + L-isoleucine + ATP = L-isoleucyl-tRNA(Ile) + AMP + diphosphate. Its function is as follows. Catalyzes the attachment of isoleucine to tRNA(Ile). As IleRS can inadvertently accommodate and process structurally similar amino acids such as valine, to avoid such errors it has two additional distinct tRNA(Ile)-dependent editing activities. One activity is designated as 'pretransfer' editing and involves the hydrolysis of activated Val-AMP. The other activity is designated 'posttransfer' editing and involves deacylation of mischarged Val-tRNA(Ile). This Shewanella oneidensis (strain ATCC 700550 / JCM 31522 / CIP 106686 / LMG 19005 / NCIMB 14063 / MR-1) protein is Isoleucine--tRNA ligase.